Here is a 633-residue protein sequence, read N- to C-terminus: Beta-myrcene synthase TPS15CT (633 aa).

The transit peptide at 1–55 directs the protein to the chloroplast; that stretch reads MHCMAVHQFSPSIVSSLPTISTYNNNHFCRFFTPKTSISPISKTKSKSSTCYPIQ. The (2E)-geranyl diphosphate site is built by Arg344, Asp381, Asp385, Arg525, and Asp528. 2 residues coordinate Mg(2+): Asp381 and Asp385. The DDXXD motif motif lies at 381 to 385; sequence DDIYD. 3 residues coordinate Mg(2+): Asp528, Thr532, and Glu536.

This sequence belongs to the terpene synthase family. Tpsb subfamily. It depends on Mg(2+) as a cofactor. The cofactor is Mn(2+).

Its subcellular location is the plastid. It localises to the chloroplast. It carries out the reaction (2E)-geranyl diphosphate = beta-myrcene + diphosphate. It functions in the pathway secondary metabolite biosynthesis; terpenoid biosynthesis. In terms of biological role, involved in monoterpene (C10) olefins biosynthesis, constituants of cannabinoids and terpenoids-rich resins. Catalyzes strictly the conversion of (2E)-geranyl diphosphate to beta-myrcene. The polypeptide is Beta-myrcene synthase TPS15CT (Cannabis sativa (Hemp)).